The chain runs to 241 residues: Probable 2-phosphosulfolactate phosphatase (241 aa).

This sequence belongs to the ComB family. Requires Mg(2+) as cofactor.

It catalyses the reaction (2R)-O-phospho-3-sulfolactate + H2O = (2R)-3-sulfolactate + phosphate. This is Probable 2-phosphosulfolactate phosphatase from Gloeothece citriformis (strain PCC 7424) (Cyanothece sp. (strain PCC 7424)).